A 197-amino-acid chain; its full sequence is Probable GTP-binding protein EngB (197 aa).

The region spanning 22–197 (TGVEVAFAGR…FKEKLDTWYQ (176 aa)) is the EngB-type G domain. GTP-binding positions include 30-37 (GRSNAGKS), 57-61 (GRTQL), 75-78 (DLPG), 142-145 (TKAD), and 177-179 (FSS). Ser37 and Thr59 together coordinate Mg(2+).

Belongs to the TRAFAC class TrmE-Era-EngA-EngB-Septin-like GTPase superfamily. EngB GTPase family. It depends on Mg(2+) as a cofactor.

In terms of biological role, necessary for normal cell division and for the maintenance of normal septation. The sequence is that of Probable GTP-binding protein EngB from Francisella tularensis subsp. tularensis (strain FSC 198).